The chain runs to 377 residues: Palmitoyltransferase PFA4 (377 aa).

Residues 1–9 (MAIKLKNRW) lie on the Cytoplasmic side of the membrane. The chain crosses the membrane as a helical span at residues 10-30 (LGVAIPAFLVALIGYGSHYFI). Residues 31-122 (LSNFLSWNEQ…NCVGHSNFPH (92 aa)) are Lumenal-facing. A DHHC domain is found at 78–128 (NYCKKCRVYKPERAHHCKTCNQCVLAMDHHCPWTLNCVGHSNFPHFMRFLF). C108 serves as the catalytic S-palmitoyl cysteine intermediate. A helical membrane pass occupies residues 123 to 143 (FMRFLFWVIFSTAYLLFLLIG). At 144 to 163 (RIYLLWSIRHTAFHHRSTSE) the chain is on the cytoplasmic side. Residues 164–184 (IIFICIMTPMDAFVLLTVSSL) traverse the membrane as a helical segment. Residues 185-377 (LGRCIYNQCL…SDFGVDTELE (193 aa)) are Lumenal-facing.

The protein belongs to the DHHC palmitoyltransferase family. PFA4 subfamily.

Its subcellular location is the endoplasmic reticulum membrane. The enzyme catalyses L-cysteinyl-[protein] + hexadecanoyl-CoA = S-hexadecanoyl-L-cysteinyl-[protein] + CoA. Functionally, mediates the reversible addition of palmitate to target proteins, thereby regulating their membrane association and biological function. The polypeptide is Palmitoyltransferase PFA4 (Kluyveromyces lactis (strain ATCC 8585 / CBS 2359 / DSM 70799 / NBRC 1267 / NRRL Y-1140 / WM37) (Yeast)).